A 365-amino-acid chain; its full sequence is WAT1-related protein At1g01070 (365 aa).

Helical transmembrane passes span 14–34 (YSPVIVMVMSNVAMGSVNALV), 46–66 (VIGAYRMAISALILVPFAYVL), 83–103 (FVSGLLGASLMQFFFLLGLSY), 107–127 (TVSCALVSMLPAITFALALIF), 139–159 (AGMLKVIGTLICISGALFLTF), 189–209 (WLLGCLYLTIGTVLLSLWMLF), 221–241 (YSSTCLMSIFAAFQCALLSLY), 255–275 (FVITVIIYAGVVGQAMTTVAT), 285–305 (VFASAFFPLTLISATLFDFLI), and 310–330 (LYLGSVIGSLVTITGLYMFLW). Residues 27-157 (MGSVNALVKK…LICISGALFL (131 aa)) enclose the EamA 1 domain. An EamA 2 domain is found at 223 to 329 (STCLMSIFAA…VTITGLYMFL (107 aa)). The span at 340 to 356 (TALSSGMDNEAQYTTPN) shows a compositional bias: polar residues. A disordered region spans residues 340–365 (TALSSGMDNEAQYTTPNKDNDSKSPV).

Belongs to the drug/metabolite transporter (DMT) superfamily. Plant drug/metabolite exporter (P-DME) (TC 2.A.7.4) family.

It is found in the membrane. The chain is WAT1-related protein At1g01070 from Arabidopsis thaliana (Mouse-ear cress).